Reading from the N-terminus, the 431-residue chain is Fumarylacetoacetase (431 aa).

Residue Asp-133 coordinates Ca(2+). A substrate-binding site is contributed by Tyr-135. His-140 (proton acceptor) is an active-site residue. Arg-149 is a substrate binding site. Ca(2+) contacts are provided by Glu-209, Glu-211, and Asp-243. Asp-243 serves as a coordination point for Mg(2+). Residues Gln-250 and Tyr-254 each contribute to the substrate site. Positions 263 and 267 each coordinate Mg(2+). Thr-362 is a substrate binding site.

The protein belongs to the FAH family. Ca(2+) serves as cofactor. Requires Mg(2+) as cofactor.

The enzyme catalyses 4-fumarylacetoacetate + H2O = acetoacetate + fumarate + H(+). Its pathway is amino-acid degradation; L-phenylalanine degradation; acetoacetate and fumarate from L-phenylalanine: step 6/6. Use of phenylalanine and phenylacetate as a carbon source. This is Fumarylacetoacetase (fahA) from Emericella nidulans (strain FGSC A4 / ATCC 38163 / CBS 112.46 / NRRL 194 / M139) (Aspergillus nidulans).